A 168-amino-acid polypeptide reads, in one-letter code: Photosystem I assembly protein Ycf3 (168 aa).

TPR repeat units lie at residues 35–68 (AFAY…EIDP), 72–105 (SYIL…NPFL), and 120–153 (GEQA…TPGN).

This sequence belongs to the Ycf3 family.

Its subcellular location is the plastid. It is found in the chloroplast thylakoid membrane. In terms of biological role, essential for the assembly of the photosystem I (PSI) complex. May act as a chaperone-like factor to guide the assembly of the PSI subunits. The polypeptide is Photosystem I assembly protein Ycf3 (Morus indica (Mulberry)).